Reading from the N-terminus, the 452-residue chain is tRNA modification GTPase MnmE (452 aa).

Residues R21, E78, and K118 each coordinate (6S)-5-formyl-5,6,7,8-tetrahydrofolate. A TrmE-type G domain is found at 214-375 (GMKVVIAGRP…LREHLKQSMG (162 aa)). N224 serves as a coordination point for K(+). GTP is bound by residues 224-229 (NAGKSS), 243-249 (TDIAGTT), 268-271 (DTAG), and 333-336 (NKAD). S228 provides a ligand contact to Mg(2+). Residues T243, I245, and T248 each coordinate K(+). A Mg(2+)-binding site is contributed by T249. K452 contributes to the (6S)-5-formyl-5,6,7,8-tetrahydrofolate binding site.

This sequence belongs to the TRAFAC class TrmE-Era-EngA-EngB-Septin-like GTPase superfamily. TrmE GTPase family. In terms of assembly, homodimer. Heterotetramer of two MnmE and two MnmG subunits. K(+) serves as cofactor.

The protein resides in the cytoplasm. Functionally, exhibits a very high intrinsic GTPase hydrolysis rate. Involved in the addition of a carboxymethylaminomethyl (cmnm) group at the wobble position (U34) of certain tRNAs, forming tRNA-cmnm(5)s(2)U34. In Pasteurella multocida (strain Pm70), this protein is tRNA modification GTPase MnmE.